The following is a 139-amino-acid chain: uncharacterized protein (139 aa).

Residues 8 to 63 (LRELRRARKLTVNQLAVYSGISSATISKIENGKRGTPKPATIKKLAAVLKVPYENL) enclose the HTH cro/C1-type domain. A DNA-binding region (H-T-H motif) is located at residues 19-38 (VNQLAVYSGISSATISKIEN).

This is an uncharacterized protein from Bacillus subtilis (strain 168).